The chain runs to 503 residues: Probable DNA ligase (503 aa).

Glu210 is an ATP binding site. Lys212 (N6-AMP-lysine intermediate) is an active-site residue. Residues Arg217, Arg232, Glu261, Phe296, Arg367, and Lys373 each contribute to the ATP site.

This sequence belongs to the ATP-dependent DNA ligase family. It depends on Mg(2+) as a cofactor.

The enzyme catalyses ATP + (deoxyribonucleotide)n-3'-hydroxyl + 5'-phospho-(deoxyribonucleotide)m = (deoxyribonucleotide)n+m + AMP + diphosphate.. DNA ligase that seals nicks in double-stranded DNA during DNA replication, DNA recombination and DNA repair. The chain is Probable DNA ligase from Rhodococcus jostii (strain RHA1).